The following is a 110-amino-acid chain: Large ribosomal subunit protein uL22 (110 aa).

It belongs to the universal ribosomal protein uL22 family. Part of the 50S ribosomal subunit.

Functionally, this protein binds specifically to 23S rRNA; its binding is stimulated by other ribosomal proteins, e.g. L4, L17, and L20. It is important during the early stages of 50S assembly. It makes multiple contacts with different domains of the 23S rRNA in the assembled 50S subunit and ribosome. The globular domain of the protein is located near the polypeptide exit tunnel on the outside of the subunit, while an extended beta-hairpin is found that lines the wall of the exit tunnel in the center of the 70S ribosome. The chain is Large ribosomal subunit protein uL22 from Dichelobacter nodosus (strain VCS1703A).